A 172-amino-acid polypeptide reads, in one-letter code: MTCYKLSRRRDLFAFPYPLTVWRDPPRSVEVVRDFVESYDIRHIYTVGDVVTRNFLEYGLAPTSVAVDEKTRRGIKVEGLGLYKRVIRVNNPPGYITEEAWAAVEEAVEGGVLIKVDGEEDMLSLAFIKLAPPRSVVAYGHYLGALVAIPVDWYRDSILRLFNYLEQCQQKA.

Residues Asp49, Val50, Val51, Asp68, Lys70, and Glu120 each coordinate GTP.

This sequence belongs to the GTP-dependent DPCK family.

It catalyses the reaction 3'-dephospho-CoA + GTP = GDP + CoA + H(+). The protein operates within cofactor biosynthesis; coenzyme A biosynthesis. Catalyzes the GTP-dependent phosphorylation of the 3'-hydroxyl group of dephosphocoenzyme A to form coenzyme A (CoA). The chain is GTP-dependent dephospho-CoA kinase from Pyrobaculum arsenaticum (strain DSM 13514 / JCM 11321 / PZ6).